The chain runs to 483 residues: Protein nucleotidyltransferase YdiU (483 aa).

Positions 87, 89, 90, 110, 122, 123, 173, and 180 each coordinate ATP. The active-site Proton acceptor is D249. Mg(2+) is bound by residues N250 and D259. D259 is a binding site for ATP.

This sequence belongs to the SELO family. Mg(2+) is required as a cofactor. It depends on Mn(2+) as a cofactor.

The enzyme catalyses L-seryl-[protein] + ATP = 3-O-(5'-adenylyl)-L-seryl-[protein] + diphosphate. The catalysed reaction is L-threonyl-[protein] + ATP = 3-O-(5'-adenylyl)-L-threonyl-[protein] + diphosphate. It catalyses the reaction L-tyrosyl-[protein] + ATP = O-(5'-adenylyl)-L-tyrosyl-[protein] + diphosphate. It carries out the reaction L-histidyl-[protein] + UTP = N(tele)-(5'-uridylyl)-L-histidyl-[protein] + diphosphate. The enzyme catalyses L-seryl-[protein] + UTP = O-(5'-uridylyl)-L-seryl-[protein] + diphosphate. The catalysed reaction is L-tyrosyl-[protein] + UTP = O-(5'-uridylyl)-L-tyrosyl-[protein] + diphosphate. Functionally, nucleotidyltransferase involved in the post-translational modification of proteins. It can catalyze the addition of adenosine monophosphate (AMP) or uridine monophosphate (UMP) to a protein, resulting in modifications known as AMPylation and UMPylation. The chain is Protein nucleotidyltransferase YdiU from Pectobacterium atrosepticum (strain SCRI 1043 / ATCC BAA-672) (Erwinia carotovora subsp. atroseptica).